Consider the following 142-residue polypeptide: Large ribosomal subunit protein uL11 (142 aa).

Belongs to the universal ribosomal protein uL11 family. Part of the ribosomal stalk of the 50S ribosomal subunit. Interacts with L10 and the large rRNA to form the base of the stalk. L10 forms an elongated spine to which L12 dimers bind in a sequential fashion forming a multimeric L10(L12)X complex. In terms of processing, one or more lysine residues are methylated.

In terms of biological role, forms part of the ribosomal stalk which helps the ribosome interact with GTP-bound translation factors. In Desulforudis audaxviator (strain MP104C), this protein is Large ribosomal subunit protein uL11.